An 88-amino-acid polypeptide reads, in one-letter code: Synaptonemal complex central element protein 3 (88 aa).

Residues 8-75 (ERSYDNMLKM…FLNCKEEMEK (68 aa)) adopt a coiled-coil conformation.

Homodimer. Can form higher-order homooligomers. Interacts with SYCP1 (via tetrameric core); the interaction remodels SYCP1 homotetramers to 2:1 heterotrimers with SYCE3. SYCP1/SYCE3 heterotrimers form lattice assemblies as part of the mature synaptonemal complex via both lateral and head-to-head interactions. Interacts with the SYCE1-SIX6OS1 complex; the interaction recruits the SYCE1-SIX6OS1 complex to the central element of the synaptonemal complex. Interacts with the SYCE2-TEX12 complex; the interaction promotes fibrous assembly of SYCE2-TEX12 as part of the synaptonemal complex central element. Interacts with SYCE1. Interacts with SYCE2. Interacts with proteasome subunit PSMA8; to participate in meiosis progression during spermatogenesis. Interacts with SPO16. In terms of tissue distribution, expression is restricted to spermatocytes and is absent in spermatogonia, spermatids and spermatogonia (at protein level). Expressed in adult testis and embryonic ovary. Expressed in the convoluted seminiferous tubules in spermatogonia and spermatocytes.

It localises to the nucleus. The protein resides in the chromosome. Functionally, major component of the transverse central element of synaptonemal complexes (SCS), formed between homologous chromosomes during meiotic prophase. Required for the assembly of the central element of the synaptonemal complex during meiosis, via remodeling of SYCP1 lattice structures and promoting recruitment of SYCE2-TEX12 and SYCE1-SIX60S1 complexes. Required for chromosome loading of the central element-specific SCS proteins, and for initiating synapsis between homologous chromosomes. Chromosome loading appears to require SYCP1. Required for fertility and normal testis development. May play a role in apoptosis of spermatogenic cells and pathogenesis of cryptorchidism. This chain is Synaptonemal complex central element protein 3, found in Mus musculus (Mouse).